Here is a 448-residue protein sequence, read N- to C-terminus: Binary larvicide subunit BinB (448 aa).

The segment at 19–200 (TNYPLNTTPT…FVNSSFYAAA (182 aa)) is beta-trefoil domain. An intrachain disulfide couples Cys67 to Cys161. A probable pore-forming domain region spans residues 226–407 (PKDAVRAVKG…APITNPLTLT (182 aa)).

Belongs to the toxin_10 family. In terms of assembly, forms a heterodimer with BinA. Post-translationally, processed by proteases extracted from mosquito larval gut.

Its subcellular location is the spore. It localises to the perispore. Functionally, component of a binary toxin active against Culex and some Aedes mosquito larvae. This subunit is responsible for localized binding to specific regions of the host larval gut. The individual subunits are not toxic. BinAB and this subunit alone bind to the gastric caecum and posterior midgut of C.quinquefasciatus larvae. Binary toxin internalization into host gut cells requires both proteins. Does not bind to the midgut of Aedes aegypti. Toxic to Aedes atropalpus mosquito larvae; mortality towards both C.quinquefasciatus and A.atropalpus is maximal by 48 hours. A.aegypti is not very susceptible to this toxin. Binding component of binary toxin. The 51 kDa polypeptide acts synergetically with the 42 kDa polypeptide for expression of a larvicidal toxin. The polypeptide is Binary larvicide subunit BinB (Lysinibacillus sphaericus (Bacillus sphaericus)).